The chain runs to 437 residues: Glycogen synthase (437 aa).

Position 15 (K15) interacts with ADP-alpha-D-glucose.

Belongs to the glycosyltransferase 1 family. Bacterial/plant glycogen synthase subfamily.

It carries out the reaction [(1-&gt;4)-alpha-D-glucosyl](n) + ADP-alpha-D-glucose = [(1-&gt;4)-alpha-D-glucosyl](n+1) + ADP + H(+). It participates in glycan biosynthesis; glycogen biosynthesis. Its function is as follows. Synthesizes alpha-1,4-glucan chains using ADP-glucose. The protein is Glycogen synthase of Thermus thermophilus (strain ATCC BAA-163 / DSM 7039 / HB27).